Reading from the N-terminus, the 130-residue chain is Small ribosomal subunit protein uS8 (130 aa).

The protein belongs to the universal ribosomal protein uS8 family. Part of the 30S ribosomal subunit. Contacts proteins S5 and S12.

Its function is as follows. One of the primary rRNA binding proteins, it binds directly to 16S rRNA central domain where it helps coordinate assembly of the platform of the 30S subunit. The chain is Small ribosomal subunit protein uS8 from Moorella thermoacetica (strain ATCC 39073 / JCM 9320).